The sequence spans 416 residues: Elongation factor 1-gamma 3 (416 aa).

In terms of domain architecture, GST N-terminal spans 1 to 82 (MALVLHCGSG…YVARLKDNSS (82 aa)). A GST C-terminal domain is found at 87–215 (SLIDYSHIEQ…FKQAESVPPV (129 aa)). The tract at residues 213-263 (PPVQKKAAPPKESKAKEAKKEAPKEAPKPKVEASEEEEAPKPKPKNPLDLL) is disordered. A compositionally biased stretch (basic and acidic residues) spans 221-245 (PPKESKAKEAKKEAPKEAPKPKVEA). Positions 256 to 416 (PKNPLDLLPP…EDLLDAKCFK (161 aa)) constitute an EF-1-gamma C-terminal domain.

EF-1 is composed of four subunits: alpha, beta, delta, and gamma.

In terms of biological role, probably plays a role in anchoring the complex to other cellular components. The polypeptide is Elongation factor 1-gamma 3 (Oryza sativa subsp. japonica (Rice)).